A 129-amino-acid chain; its full sequence is Glycoprotein hormone alpha-2 (129 aa).

The signal sequence occupies residues 1 to 23 (MPMASPQTLVLYLLVLAVTEAWG). Disulfide bonds link cysteine 31/cysteine 89, cysteine 48/cysteine 103, cysteine 57/cysteine 119, and cysteine 61/cysteine 121. Asparagine 37 and asparagine 81 each carry an N-linked (GlcNAc...) asparagine glycan.

This sequence belongs to the glycoprotein hormones subunit alpha family. Heterodimer with GPHB5; this heterodimer interacts with thyroid-stimulating hormone receptor (TSHR), and hence stimulates cAMP production. Glycosylated. Found in a variety of tissues.

Its subcellular location is the secreted. In terms of biological role, functions as a heterodimeric glycoprotein hormone with GPHB5 able to bind and activate the thyroid-stimulating hormone receptor (TSHR), leading to increased cAMP production. Plays a central role in controlling thyroid cell metabolism. The protein is Glycoprotein hormone alpha-2 (GPHA2) of Homo sapiens (Human).